A 138-amino-acid polypeptide reads, in one-letter code: Phosphoribosyl-AMP cyclohydrolase (138 aa).

Asp84 is a binding site for Mg(2+). Cys85 lines the Zn(2+) pocket. Positions 86 and 88 each coordinate Mg(2+). Zn(2+) contacts are provided by Cys102 and Cys109.

It belongs to the PRA-CH family. As to quaternary structure, homodimer. It depends on Mg(2+) as a cofactor. Zn(2+) is required as a cofactor.

It localises to the cytoplasm. The enzyme catalyses 1-(5-phospho-beta-D-ribosyl)-5'-AMP + H2O = 1-(5-phospho-beta-D-ribosyl)-5-[(5-phospho-beta-D-ribosylamino)methylideneamino]imidazole-4-carboxamide. It functions in the pathway amino-acid biosynthesis; L-histidine biosynthesis; L-histidine from 5-phospho-alpha-D-ribose 1-diphosphate: step 3/9. Catalyzes the hydrolysis of the adenine ring of phosphoribosyl-AMP. In Burkholderia lata (strain ATCC 17760 / DSM 23089 / LMG 22485 / NCIMB 9086 / R18194 / 383), this protein is Phosphoribosyl-AMP cyclohydrolase.